The chain runs to 565 residues: NAD-dependent malic enzyme (565 aa).

Residue Tyr-104 is the Proton donor of the active site. Arg-157 serves as a coordination point for NAD(+). Lys-175 (proton acceptor) is an active-site residue. Residues Glu-246, Asp-247, and Asp-270 each contribute to the a divalent metal cation site. Residues Asp-270 and Asn-418 each contribute to the NAD(+) site.

This sequence belongs to the malic enzymes family. As to quaternary structure, homotetramer. It depends on Mg(2+) as a cofactor. Mn(2+) is required as a cofactor.

The enzyme catalyses (S)-malate + NAD(+) = pyruvate + CO2 + NADH. It catalyses the reaction oxaloacetate + H(+) = pyruvate + CO2. The polypeptide is NAD-dependent malic enzyme (Salmonella heidelberg (strain SL476)).